Here is a 675-residue protein sequence, read N- to C-terminus: tRNA 5-methylaminomethyl-2-thiouridine biosynthesis bifunctional protein MnmC (675 aa).

Residues 1-245 (MANLPIQHAS…KREMLSGLLP (245 aa)) are tRNA (mnm(5)s(2)U34)-methyltransferase. Residues 271–675 (IGGGIASVLT…LLKGKPVTHD (405 aa)) form an FAD-dependent cmnm(5)s(2)U34 oxidoreductase region.

This sequence in the N-terminal section; belongs to the methyltransferase superfamily. tRNA (mnm(5)s(2)U34)-methyltransferase family. In the C-terminal section; belongs to the DAO family. It depends on FAD as a cofactor.

It is found in the cytoplasm. It catalyses the reaction 5-aminomethyl-2-thiouridine(34) in tRNA + S-adenosyl-L-methionine = 5-methylaminomethyl-2-thiouridine(34) in tRNA + S-adenosyl-L-homocysteine + H(+). In terms of biological role, catalyzes the last two steps in the biosynthesis of 5-methylaminomethyl-2-thiouridine (mnm(5)s(2)U) at the wobble position (U34) in tRNA. Catalyzes the FAD-dependent demodification of cmnm(5)s(2)U34 to nm(5)s(2)U34, followed by the transfer of a methyl group from S-adenosyl-L-methionine to nm(5)s(2)U34, to form mnm(5)s(2)U34. In Pectobacterium atrosepticum (strain SCRI 1043 / ATCC BAA-672) (Erwinia carotovora subsp. atroseptica), this protein is tRNA 5-methylaminomethyl-2-thiouridine biosynthesis bifunctional protein MnmC.